Consider the following 249-residue polypeptide: Protein YIP5 (249 aa).

5 consecutive transmembrane segments (helical) span residues L87–I107, A131–W151, L164–L184, L188–F208, and L228–F248.

This sequence belongs to the YIP1 family. Interacts with the YIP1 family members yip1 and yip4, and several Rab GTPases. The C-terminal cysteines in the Rab GTPase ypt2 are essential for the interaction. Interacts with snx3.

Its subcellular location is the membrane. Functionally, possible role in vesicle-mediated transport. May be involved in proper membrane localization of Rab GTPases. The polypeptide is Protein YIP5 (Schizosaccharomyces pombe (strain 972 / ATCC 24843) (Fission yeast)).